The chain runs to 63 residues: Large ribosomal subunit protein uL29 (63 aa).

It belongs to the universal ribosomal protein uL29 family.

The chain is Large ribosomal subunit protein uL29 from Vibrio parahaemolyticus serotype O3:K6 (strain RIMD 2210633).